Reading from the N-terminus, the 596-residue chain is Structural protein precursor VP8 (596 aa).

Its subcellular location is the virion. 120 subunits of the putative clamp protein VP8b appear to stabilize the capsid shell. In Oryza latifolia (Indian wild rice), this protein is Structural protein precursor VP8.